A 361-amino-acid polypeptide reads, in one-letter code: D-alanine--D-alanine ligase (361 aa).

The 205-residue stretch at 149-353 (KKLMAAEGLP…YEELLDVLVQ (205 aa)) folds into the ATP-grasp domain. 176-231 (KKLLGLPVFVKPARGGSSIGISKVSRWEDLPAAVDLARQHDEKVIVESEIVGPEVE) contacts ATP. The Mg(2+) site is built by Asp308, Glu320, and Asn322.

Belongs to the D-alanine--D-alanine ligase family. Requires Mg(2+) as cofactor. The cofactor is Mn(2+).

It localises to the cytoplasm. It carries out the reaction 2 D-alanine + ATP = D-alanyl-D-alanine + ADP + phosphate + H(+). It functions in the pathway cell wall biogenesis; peptidoglycan biosynthesis. In terms of biological role, cell wall formation. In Corynebacterium efficiens (strain DSM 44549 / YS-314 / AJ 12310 / JCM 11189 / NBRC 100395), this protein is D-alanine--D-alanine ligase.